The chain runs to 104 residues: Large ribosomal subunit protein bL21 (104 aa).

This sequence belongs to the bacterial ribosomal protein bL21 family. Part of the 50S ribosomal subunit. Contacts protein L20.

This protein binds to 23S rRNA in the presence of protein L20. This is Large ribosomal subunit protein bL21 from Lactococcus lactis subsp. lactis (strain IL1403) (Streptococcus lactis).